Here is a 365-residue protein sequence, read N- to C-terminus: S-adenosylmethionine:tRNA ribosyltransferase-isomerase (365 aa).

This sequence belongs to the QueA family. Monomer.

The protein resides in the cytoplasm. The catalysed reaction is 7-aminomethyl-7-carbaguanosine(34) in tRNA + S-adenosyl-L-methionine = epoxyqueuosine(34) in tRNA + adenine + L-methionine + 2 H(+). It functions in the pathway tRNA modification; tRNA-queuosine biosynthesis. Transfers and isomerizes the ribose moiety from AdoMet to the 7-aminomethyl group of 7-deazaguanine (preQ1-tRNA) to give epoxyqueuosine (oQ-tRNA). In Rickettsia conorii (strain ATCC VR-613 / Malish 7), this protein is S-adenosylmethionine:tRNA ribosyltransferase-isomerase.